We begin with the raw amino-acid sequence, 143 residues long: Nucleoside diphosphate kinase (143 aa).

6 residues coordinate ATP: Lys11, Phe59, Arg87, Thr93, Arg104, and Asn114. His117 serves as the catalytic Pros-phosphohistidine intermediate.

Belongs to the NDK family. As to quaternary structure, homotetramer. Requires Mg(2+) as cofactor.

It is found in the cytoplasm. The catalysed reaction is a 2'-deoxyribonucleoside 5'-diphosphate + ATP = a 2'-deoxyribonucleoside 5'-triphosphate + ADP. It catalyses the reaction a ribonucleoside 5'-diphosphate + ATP = a ribonucleoside 5'-triphosphate + ADP. Functionally, major role in the synthesis of nucleoside triphosphates other than ATP. The ATP gamma phosphate is transferred to the NDP beta phosphate via a ping-pong mechanism, using a phosphorylated active-site intermediate. This chain is Nucleoside diphosphate kinase, found in Shewanella halifaxensis (strain HAW-EB4).